Reading from the N-terminus, the 433-residue chain is Tol-Pal system protein TolB (433 aa).

The signal sequence occupies residues 1–21 (MRNLLRGMLVVICCMAGIVMA).

This sequence belongs to the TolB family. In terms of assembly, the Tol-Pal system is composed of five core proteins: the inner membrane proteins TolA, TolQ and TolR, the periplasmic protein TolB and the outer membrane protein Pal. They form a network linking the inner and outer membranes and the peptidoglycan layer.

The protein localises to the periplasm. Functionally, part of the Tol-Pal system, which plays a role in outer membrane invagination during cell division and is important for maintaining outer membrane integrity. The chain is Tol-Pal system protein TolB from Pseudomonas fluorescens (strain Pf0-1).